A 283-amino-acid polypeptide reads, in one-letter code: Methyltransferase cpsF (283 aa).

It belongs to the methyltransferase superfamily. LaeA methyltransferase family.

The catalysed reaction is campesine A + S-adenosyl-L-methionine = campesine B + S-adenosyl-L-homocysteine + H(+). It functions in the pathway alkaloid biosynthesis. Functionally, methyltransferase; part of the gene cluster that mediates the biosynthesis of campesine G, a dimeric indole piperazine alkaloid that shows good insecticidal activity Galleria mellonella. Within the pathway, cpsF methylates campesine A at N13 of piperazine ring to produce campesine B. The non-canonical non-ribosomal peptide synthetase cpsA catalyzes the first steps of the pathway by producing L-tryptophanal and L-valinal from their respective amino-acids. These products condensate spontaneously to form trypyl-valyl pyrazine also known as didehydrocampesine A. The NmrA-like family domain-containing oxidoreductase cpsB is the next enzyme in cps pathway and reduces the unstable didehydrocampesine A to campesine A. The methyltransferase cpsF and the acetyltransferase cpsE both recognize N13 of piperazine ring to carry out methylation and acetylation of campesine A to produce campesine C and B, respectively. The cytochrome P450 monooxygenase cpsD then acts as a dimerase that catalyzes oxidative heterocoupling between campesine B and C to produce heterodimers with unexpected 6/5/6/6/6/6/5/6 eight-ring scaffold called campesine D. Finally,the cytochrome P450 monooxygenase cpsC is a regioselective dehydrogenase that catalyzes dehydrogenation reaction towards C2-N1 to produce campesine G. The sequence is that of Methyltransferase cpsF from Aspergillus campestris (strain IBT 28561).